The sequence spans 346 residues: MEVKVSGITKQFDRFPALNDVSLDIRSGELIALLGPSGSGKTTLLRLIAGLEQPTQGQIFFGDEDASHRTVQERNVGFVFQHYALFRHMTVADNIAFGLKVRPSASRPPKAEIRRRVSELLDMVHLTGLEKRYPTQLSGGQRQRVALARAVAIEPKVLLLDEPFGALDAKVRKELRRWLREFHDRTGHTTVFVTHDQEEALELADRVVVMSQGKIEQVGTADDVYDTPNSPFVFSFIGESSSLPVTIRDGHVLFQGESIGINEGGTGEGELFFRPEDVVLTDEKDALYGKVTTCRRLAGTRIAEIDIANNGHEPYHLEIEVPLNAAVAVGAELRFRPTRWKVFGKK.

Positions 3 to 237 (VKVSGITKQF…PNSPFVFSFI (235 aa)) constitute an ABC transporter domain. An ATP-binding site is contributed by 35–42 (GPSGSGKT).

It belongs to the ABC transporter superfamily. Sulfate/tungstate importer (TC 3.A.1.6) family. The complex is composed of two ATP-binding proteins (CysA), two transmembrane proteins (CysT and CysW) and a solute-binding protein (CysP).

It localises to the cell inner membrane. It catalyses the reaction sulfate(out) + ATP + H2O = sulfate(in) + ADP + phosphate + H(+). The catalysed reaction is thiosulfate(out) + ATP + H2O = thiosulfate(in) + ADP + phosphate + H(+). Its function is as follows. Part of the ABC transporter complex CysAWTP involved in sulfate/thiosulfate import. Responsible for energy coupling to the transport system. The sequence is that of Sulfate/thiosulfate import ATP-binding protein CysA 1 from Agrobacterium fabrum (strain C58 / ATCC 33970) (Agrobacterium tumefaciens (strain C58)).